A 504-amino-acid polypeptide reads, in one-letter code: ATP synthase subunit alpha (504 aa).

Gly169 to Thr176 serves as a coordination point for ATP.

Belongs to the ATPase alpha/beta chains family. In terms of assembly, F-type ATPases have 2 components, CF(1) - the catalytic core - and CF(0) - the membrane proton channel. CF(1) has five subunits: alpha(3), beta(3), gamma(1), delta(1), epsilon(1). CF(0) has three main subunits: a(1), b(2) and c(9-12). The alpha and beta chains form an alternating ring which encloses part of the gamma chain. CF(1) is attached to CF(0) by a central stalk formed by the gamma and epsilon chains, while a peripheral stalk is formed by the delta and b chains.

It is found in the cell membrane. It catalyses the reaction ATP + H2O + 4 H(+)(in) = ADP + phosphate + 5 H(+)(out). Produces ATP from ADP in the presence of a proton gradient across the membrane. The alpha chain is a regulatory subunit. The sequence is that of ATP synthase subunit alpha from Syntrophomonas wolfei subsp. wolfei (strain DSM 2245B / Goettingen).